Here is a 267-residue protein sequence, read N- to C-terminus: Glucosamine-6-phosphate deaminase (267 aa).

Catalysis depends on aspartate 72, which acts as the Proton acceptor; for enolization step. The For ring-opening step role is filled by aspartate 141. Residue histidine 143 is the Proton acceptor; for ring-opening step of the active site. Catalysis depends on glutamate 148, which acts as the For ring-opening step.

This sequence belongs to the glucosamine/galactosamine-6-phosphate isomerase family. NagB subfamily.

It carries out the reaction alpha-D-glucosamine 6-phosphate + H2O = beta-D-fructose 6-phosphate + NH4(+). It functions in the pathway amino-sugar metabolism; N-acetylneuraminate degradation; D-fructose 6-phosphate from N-acetylneuraminate: step 5/5. With respect to regulation, allosterically activated by N-acetylglucosamine 6-phosphate (GlcNAc6P). Functionally, catalyzes the reversible isomerization-deamination of glucosamine 6-phosphate (GlcN6P) to form fructose 6-phosphate (Fru6P) and ammonium ion. This Borrelia hermsii (strain HS1 / DAH) protein is Glucosamine-6-phosphate deaminase.